Reading from the N-terminus, the 278-residue chain is Large ribosomal subunit protein uL2 (278 aa).

2 disordered regions span residues 28–56 (KPVK…GIAG) and 221–278 (RGVA…KKKR). Over residues 269–278 (IRSRHAKKKR) the composition is skewed to basic residues.

The protein belongs to the universal ribosomal protein uL2 family. Part of the 50S ribosomal subunit. Forms a bridge to the 30S subunit in the 70S ribosome.

Its function is as follows. One of the primary rRNA binding proteins. Required for association of the 30S and 50S subunits to form the 70S ribosome, for tRNA binding and peptide bond formation. It has been suggested to have peptidyltransferase activity; this is somewhat controversial. Makes several contacts with the 16S rRNA in the 70S ribosome. This is Large ribosomal subunit protein uL2 from Rhizorhabdus wittichii (strain DSM 6014 / CCUG 31198 / JCM 15750 / NBRC 105917 / EY 4224 / RW1) (Sphingomonas wittichii).